A 515-amino-acid polypeptide reads, in one-letter code: ATP synthase subunit alpha (515 aa).

171 to 178 (GDRQTGKT) provides a ligand contact to ATP.

The protein belongs to the ATPase alpha/beta chains family. As to quaternary structure, F-type ATPases have 2 components, CF(1) - the catalytic core - and CF(0) - the membrane proton channel. CF(1) has five subunits: alpha(3), beta(3), gamma(1), delta(1), epsilon(1). CF(0) has three main subunits: a(1), b(2) and c(9-12). The alpha and beta chains form an alternating ring which encloses part of the gamma chain. CF(1) is attached to CF(0) by a central stalk formed by the gamma and epsilon chains, while a peripheral stalk is formed by the delta and b chains.

It localises to the cell membrane. It carries out the reaction ATP + H2O + 4 H(+)(in) = ADP + phosphate + 5 H(+)(out). In terms of biological role, produces ATP from ADP in the presence of a proton gradient across the membrane. The alpha chain is a regulatory subunit. This chain is ATP synthase subunit alpha, found in Stenotrophomonas maltophilia (strain K279a).